A 180-amino-acid polypeptide reads, in one-letter code: DNA-directed RNA polymerase subunit omega (180 aa).

The tract at residues 100-180 is disordered; the sequence is ISKSGTPILP…NSDDSETTNS (81 aa). Composition is skewed to acidic residues over residues 137–151 and 159–180; these read EVDVDAELEVGDEET and AEAETEAETTEVNSDDSETTNS.

This sequence belongs to the RNA polymerase subunit omega family. In terms of assembly, the RNAP catalytic core consists of 2 alpha, 1 beta, 1 beta' and 1 omega subunit. When a sigma factor is associated with the core the holoenzyme is formed, which can initiate transcription.

The enzyme catalyses RNA(n) + a ribonucleoside 5'-triphosphate = RNA(n+1) + diphosphate. Promotes RNA polymerase assembly. Latches the N- and C-terminal regions of the beta' subunit thereby facilitating its interaction with the beta and alpha subunits. In Pelagibacter ubique (strain HTCC1062), this protein is DNA-directed RNA polymerase subunit omega.